The following is a 312-amino-acid chain: Ribosomal protein L11 methyltransferase (312 aa).

S-adenosyl-L-methionine contacts are provided by T162, G183, D205, and N248.

This sequence belongs to the methyltransferase superfamily. PrmA family.

It is found in the cytoplasm. It catalyses the reaction L-lysyl-[protein] + 3 S-adenosyl-L-methionine = N(6),N(6),N(6)-trimethyl-L-lysyl-[protein] + 3 S-adenosyl-L-homocysteine + 3 H(+). Functionally, methylates ribosomal protein L11. This chain is Ribosomal protein L11 methyltransferase, found in Bacillus cytotoxicus (strain DSM 22905 / CIP 110041 / 391-98 / NVH 391-98).